Reading from the N-terminus, the 341-residue chain is DNA-directed RNA polymerase subunit alpha (341 aa).

An alpha N-terminal domain (alpha-NTD) region spans residues 1–237 (MLSLSKNWNA…EQLQLFISFE (237 aa)). The segment at 247–341 (TDALPFSPYL…LSKRYEDSYN (95 aa)) is alpha C-terminal domain (alpha-CTD).

This sequence belongs to the RNA polymerase alpha chain family. As to quaternary structure, homodimer. The RNAP catalytic core consists of 2 alpha, 1 beta, 1 beta' and 1 omega subunit. When a sigma factor is associated with the core the holoenzyme is formed, which can initiate transcription.

The enzyme catalyses RNA(n) + a ribonucleoside 5'-triphosphate = RNA(n+1) + diphosphate. Its function is as follows. DNA-dependent RNA polymerase catalyzes the transcription of DNA into RNA using the four ribonucleoside triphosphates as substrates. The chain is DNA-directed RNA polymerase subunit alpha from Rickettsia bellii (strain RML369-C).